Reading from the N-terminus, the 167-residue chain is MLILGIDPGTAIVGYGLVEARAGQTRALVYDCIRTPAGEDPCRRLATIYAGIRELIERLQPETMAVEELFFNKNSKTALAVGQARGVILLAAAHTGLPVAEYTPLEVKQAVAGFGRAPKEQVQRMVQALLGLEEKPRPDDVADALAVAVCHASFAPWRQREKEVAGR.

Catalysis depends on residues Asp7, Glu67, and Asp140. Mg(2+) is bound by residues Asp7, Glu67, and Asp140.

The protein belongs to the RuvC family. As to quaternary structure, homodimer which binds Holliday junction (HJ) DNA. The HJ becomes 2-fold symmetrical on binding to RuvC with unstacked arms; it has a different conformation from HJ DNA in complex with RuvA. In the full resolvosome a probable DNA-RuvA(4)-RuvB(12)-RuvC(2) complex forms which resolves the HJ. Mg(2+) serves as cofactor.

The protein localises to the cytoplasm. The catalysed reaction is Endonucleolytic cleavage at a junction such as a reciprocal single-stranded crossover between two homologous DNA duplexes (Holliday junction).. In terms of biological role, the RuvA-RuvB-RuvC complex processes Holliday junction (HJ) DNA during genetic recombination and DNA repair. Endonuclease that resolves HJ intermediates. Cleaves cruciform DNA by making single-stranded nicks across the HJ at symmetrical positions within the homologous arms, yielding a 5'-phosphate and a 3'-hydroxyl group; requires a central core of homology in the junction. The consensus cleavage sequence is 5'-(A/T)TT(C/G)-3'. Cleavage occurs on the 3'-side of the TT dinucleotide at the point of strand exchange. HJ branch migration catalyzed by RuvA-RuvB allows RuvC to scan DNA until it finds its consensus sequence, where it cleaves and resolves the cruciform DNA. The sequence is that of Crossover junction endodeoxyribonuclease RuvC from Moorella thermoacetica (strain ATCC 39073 / JCM 9320).